Here is a 228-residue protein sequence, read N- to C-terminus: Histidine decarboxylase (228 aa).

H30 lines the substrate pocket. Position 143 is an N6-(pyridoxal phosphate)lysine (K143).

The protein belongs to the group II decarboxylase family. In terms of assembly, homotetramer. Pyridoxal 5'-phosphate is required as a cofactor.

The catalysed reaction is L-histidine + H(+) = histamine + CO2. In Raoultella ornithinolytica (Klebsiella ornithinolytica), this protein is Histidine decarboxylase (hdc).